A 174-amino-acid chain; its full sequence is Alpha-crystallin B chain (174 aa).

N-acetylmethionine is present on methionine 1. The region spanning arginine 55–glutamate 163 is the sHSP domain. Zn(2+) is bound by residues histidine 82, histidine 103, glutamate 105, and histidine 110. The segment at arginine 148–lysine 174 is disordered. Residues lysine 149–proline 166 show a composition bias toward basic and acidic residues.

This sequence belongs to the small heat shock protein (HSP20) family. As to quaternary structure, heteromer composed of three CRYAA and one CRYAB subunits. Aggregates with homologous proteins, including the small heat shock protein HSPB1, to form large heteromeric complexes. Inter-subunit bridging via zinc ions enhances stability, which is crucial as there is no protein turn over in the lens. In terms of tissue distribution, lens as well as other tissues.

May contribute to the transparency and refractive index of the lens. The polypeptide is Alpha-crystallin B chain (CRYAB) (Gallus gallus (Chicken)).